The sequence spans 62 residues: UPF0434 protein Rleg2_3773 (62 aa).

It belongs to the UPF0434 family.

The chain is UPF0434 protein Rleg2_3773 from Rhizobium leguminosarum bv. trifolii (strain WSM2304).